A 312-amino-acid polypeptide reads, in one-letter code: tRNA uridine(34) hydroxylase (312 aa).

The Rhodanese domain occupies 124-218; that stretch reads SDPEVLLIDT…YLEEVPEQES (95 aa). Residue cysteine 178 is the Cysteine persulfide intermediate of the active site. Positions 293 to 312 are disordered; it reads AKARNQPHPIGRNYRLPSEA.

Belongs to the TrhO family.

It carries out the reaction uridine(34) in tRNA + AH2 + O2 = 5-hydroxyuridine(34) in tRNA + A + H2O. In terms of biological role, catalyzes oxygen-dependent 5-hydroxyuridine (ho5U) modification at position 34 in tRNAs. In Pseudomonas syringae pv. syringae (strain B728a), this protein is tRNA uridine(34) hydroxylase.